A 1173-amino-acid polypeptide reads, in one-letter code: Eukaryotic translation initiation factor 3 subunit A (1173 aa).

Residues 319–502 (LQRMAAHVLL…NSIYFGTDLT (184 aa)) form the PCI domain. 2 disordered regions span residues 589-613 (QNNA…LAEQ) and 836-1173 (AAEA…PVQL). Composition is skewed to basic and acidic residues over residues 836-900 (AAEA…RGGD), 925-1011 (DRNE…EPDS), 1028-1081 (SRDD…DAAP), and 1090-1125 (DAPR…RAPK). Over residues 1128-1142 (GPSGGTGTAAGGGGN) the composition is skewed to gly residues. The segment covering 1149–1165 (PRDEPAPKRDQPQDKGK) has biased composition (basic and acidic residues).

Belongs to the eIF-3 subunit A family. Component of the eukaryotic translation initiation factor 3 (eIF-3) complex. The eIF-3 complex interacts with pix.

Its subcellular location is the cytoplasm. Its function is as follows. RNA-binding component of the eukaryotic translation initiation factor 3 (eIF-3) complex, which is involved in protein synthesis of a specialized repertoire of mRNAs and, together with other initiation factors, stimulates binding of mRNA and methionyl-tRNAi to the 40S ribosome. The eIF-3 complex specifically targets and initiates translation of a subset of mRNAs involved in cell proliferation. This chain is Eukaryotic translation initiation factor 3 subunit A, found in Drosophila persimilis (Fruit fly).